The sequence spans 139 residues: Small ribosomal subunit protein bS6 (139 aa).

Residues 118-139 (SFKGGSKIETPTGSESTDIQEK) are disordered. A compositionally biased stretch (polar residues) spans 126-139 (ETPTGSESTDIQEK).

It belongs to the bacterial ribosomal protein bS6 family.

Binds together with bS18 to 16S ribosomal RNA. This is Small ribosomal subunit protein bS6 from Borrelia garinii subsp. bavariensis (strain ATCC BAA-2496 / DSM 23469 / PBi) (Borreliella bavariensis).